The primary structure comprises 157 residues: Endoribonuclease YbeY (157 aa).

3 residues coordinate Zn(2+): His116, His120, and His126.

Belongs to the endoribonuclease YbeY family. Zn(2+) serves as cofactor.

The protein resides in the cytoplasm. Its function is as follows. Single strand-specific metallo-endoribonuclease involved in late-stage 70S ribosome quality control and in maturation of the 3' terminus of the 16S rRNA. The polypeptide is Endoribonuclease YbeY (Arthrobacter sp. (strain FB24)).